The following is a 576-amino-acid chain: V-type ATP synthase alpha chain (576 aa).

238 to 245 lines the ATP pocket; the sequence is GPFGAGKT.

Belongs to the ATPase alpha/beta chains family.

The enzyme catalyses ATP + H2O + 4 H(+)(in) = ADP + phosphate + 5 H(+)(out). Its function is as follows. Produces ATP from ADP in the presence of a proton gradient across the membrane. The V-type alpha chain is a catalytic subunit. In Borrelia recurrentis (strain A1), this protein is V-type ATP synthase alpha chain.